Consider the following 209-residue polypeptide: MTAKFIVIEGLEGAGKSTAIQQVIDALAAHGIENPESTREPGGTPLAEQMRALIKEGHPDEPLTDMAELLLLYAARIQLVDNIIKPALAEGRWVVGDRHDMSSQAYQGGGRGFDKALMENLRDTVLGDFCPDLTIYMDIDPILGLERARGRGELDRIEKMNVDFFHRARARFLELSENNPKVIIIDAGQSLENVTSDLKQALNHWLEKQ.

10-17 lines the ATP pocket; it reads GLEGAGKS.

Belongs to the thymidylate kinase family.

It catalyses the reaction dTMP + ATP = dTDP + ADP. Phosphorylation of dTMP to form dTDP in both de novo and salvage pathways of dTTP synthesis. This chain is Thymidylate kinase, found in Photobacterium profundum (strain SS9).